A 177-amino-acid chain; its full sequence is Large ribosomal subunit protein uL6 (177 aa).

Belongs to the universal ribosomal protein uL6 family. As to quaternary structure, part of the 50S ribosomal subunit.

Its function is as follows. This protein binds to the 23S rRNA, and is important in its secondary structure. It is located near the subunit interface in the base of the L7/L12 stalk, and near the tRNA binding site of the peptidyltransferase center. This is Large ribosomal subunit protein uL6 from Colwellia psychrerythraea (strain 34H / ATCC BAA-681) (Vibrio psychroerythus).